The sequence spans 485 residues: Probable high-affinity nitrate transporter 2.4 (485 aa).

Helical transmembrane passes span 56-76 (WMSL…LPAM), 80-100 (LVLA…ATLV), 119-139 (GVAS…ASSP), 147-167 (FVAG…SRIF), 177-197 (AVAA…MPVA), 215-235 (VTYL…LAFP), 270-290 (AWLL…MENV), 305-327 (AAGA…GGVA), 341-361 (LWAL…VGRM), 377-397 (VACA…VPFV), 405-425 (VSGM…RLFF), and 435-455 (AISC…LIHF).

Belongs to the major facilitator superfamily. Nitrate/nitrite porter (TC 2.A.1.8) family. In terms of tissue distribution, expressed in the base of the lateral root primordia, root-shoot junction zone, leaves, ends of the husk and vascular tissue of the anthers.

It is found in the cell membrane. Involved in nitrate transport. In Oryza sativa subsp. japonica (Rice), this protein is Probable high-affinity nitrate transporter 2.4 (NRT2.4).